The following is a 544-amino-acid chain: CTP synthase (544 aa).

The interval 1 to 267 (MAKFVFITGG…AQRVLQILNL (267 aa)) is amidoligase domain. S13 is a CTP binding site. UTP is bound at residue S13. 14–19 (SIGKGI) is an ATP binding site. Position 54 (Y54) interacts with L-glutamine. An ATP-binding site is contributed by D71. D71 and E141 together coordinate Mg(2+). Residues 148–150 (DIE), 188–193 (KTKPTQ), and K224 contribute to the CTP site. UTP is bound by residues 188–193 (KTKPTQ) and K224. In terms of domain architecture, Glutamine amidotransferase type-1 spans 292–534 (EIAIVGKYVR…IEAALRSRSR (243 aa)). G354 lines the L-glutamine pocket. The Nucleophile; for glutamine hydrolysis role is filled by C381. L-glutamine-binding positions include 382-385 (LGMQ), E405, and R462. Residues H507 and E509 contribute to the active site.

This sequence belongs to the CTP synthase family. In terms of assembly, homotetramer.

The catalysed reaction is UTP + L-glutamine + ATP + H2O = CTP + L-glutamate + ADP + phosphate + 2 H(+). It catalyses the reaction L-glutamine + H2O = L-glutamate + NH4(+). It carries out the reaction UTP + NH4(+) + ATP = CTP + ADP + phosphate + 2 H(+). It participates in pyrimidine metabolism; CTP biosynthesis via de novo pathway; CTP from UDP: step 2/2. Its activity is regulated as follows. Allosterically activated by GTP, when glutamine is the substrate; GTP has no effect on the reaction when ammonia is the substrate. The allosteric effector GTP functions by stabilizing the protein conformation that binds the tetrahedral intermediate(s) formed during glutamine hydrolysis. Inhibited by the product CTP, via allosteric rather than competitive inhibition. In terms of biological role, catalyzes the ATP-dependent amination of UTP to CTP with either L-glutamine or ammonia as the source of nitrogen. Regulates intracellular CTP levels through interactions with the four ribonucleotide triphosphates. The chain is CTP synthase from Synechococcus sp. (strain JA-3-3Ab) (Cyanobacteria bacterium Yellowstone A-Prime).